Here is a 307-residue protein sequence, read N- to C-terminus: Pantothenate kinase (307 aa).

87-94 (GSVAVGKS) contacts ATP.

Belongs to the prokaryotic pantothenate kinase family.

It is found in the cytoplasm. It carries out the reaction (R)-pantothenate + ATP = (R)-4'-phosphopantothenate + ADP + H(+). It functions in the pathway cofactor biosynthesis; coenzyme A biosynthesis; CoA from (R)-pantothenate: step 1/5. This is Pantothenate kinase from Vibrio vulnificus (strain CMCP6).